Reading from the N-terminus, the 288-residue chain is MTEGRCAQHPDGLDVQDVCDPDDPRLDDFRDLNSIDRRPDLPTGKALVIAEGVLVVQRMLASRFTPLALFGTDRRLAELKDDLAGVGAPYYRASADVMARVIGFHLNRGVLAAARRVPEPSVAQVVAGARTVAVLEGVNDHENLGSIFRNAAGLSVDAVVFGTGCADPLYRRAVRVSMGHALLVPYARAADWPTELMTLKESGFRLLAMTPHGNACKLPEAIAAVSHERIALLVGAEGPGLTAAALRISDVRVRIPMSRGTDSLNVATAAALAFYERTRSGHHIGPGT.

The segment covering 1–12 (MTEGRCAQHPDG) has biased composition (basic and acidic residues). A disordered region spans residues 1–20 (MTEGRCAQHPDGLDVQDVCD).

This sequence belongs to the class IV-like SAM-binding methyltransferase superfamily. RNA methyltransferase TrmH family.

This is an uncharacterized protein from Mycobacterium bovis (strain ATCC BAA-935 / AF2122/97).